The following is an 89-amino-acid chain: Small ribosomal subunit protein bS20 (89 aa).

Disordered regions lie at residues 1-25 (MANIKSAIKRAKTSEKRRAHNASMK) and 69-89 (KNAASRQKSRLAKKLNSIQAS). The span at 7 to 20 (AIKRAKTSEKRRAH) shows a compositional bias: basic residues.

It belongs to the bacterial ribosomal protein bS20 family.

Binds directly to 16S ribosomal RNA. The polypeptide is Small ribosomal subunit protein bS20 (Geobacillus kaustophilus (strain HTA426)).